The following is a 166-amino-acid chain: Putative peptidyl-prolyl cis-trans isomerase dodo (166 aa).

In terms of domain architecture, WW spans Glu5–Glu39. The disordered stretch occupies residues Ser32–Asp53. Residues Ala44–Asp53 are compositionally biased toward gly residues. Residues Pro55–Ala166 enclose the PpiC domain.

The enzyme catalyses [protein]-peptidylproline (omega=180) = [protein]-peptidylproline (omega=0). The protein is Putative peptidyl-prolyl cis-trans isomerase dodo (dod) of Drosophila melanogaster (Fruit fly).